We begin with the raw amino-acid sequence, 237 residues long: UPF0688 protein C1orf174 homolog (237 aa).

A disordered region spans residues 1 to 187 (MRSRKLAGGV…LLDDDSNQPM (187 aa)). Over residues 11-28 (RSSARLRARSCSAASASA) the composition is skewed to low complexity. Residues 29 to 47 (QDTHVTTSAQTACQTPSSH) are compositionally biased toward polar residues. Residues 48–76 (KATDRRTSKKFKYDKGHIVKSELQKHRSD) show a composition bias toward basic and acidic residues. At Ser183 the chain carries Phosphoserine.

Belongs to the UPF0688 family.

It is found in the nucleus. The sequence is that of UPF0688 protein C1orf174 homolog from Bos taurus (Bovine).